The chain runs to 224 residues: Flagellar L-ring protein (224 aa).

An N-terminal signal peptide occupies residues 1-15; it reads MLRYLMVGSLLVLAG. The N-palmitoyl cysteine moiety is linked to residue Cys-16. Cys-16 carries the S-diacylglycerol cysteine lipid modification.

The protein belongs to the FlgH family. In terms of assembly, the basal body constitutes a major portion of the flagellar organelle and consists of four rings (L,P,S, and M) mounted on a central rod.

The protein resides in the cell outer membrane. The protein localises to the bacterial flagellum basal body. Functionally, assembles around the rod to form the L-ring and probably protects the motor/basal body from shearing forces during rotation. The chain is Flagellar L-ring protein from Shewanella amazonensis (strain ATCC BAA-1098 / SB2B).